Reading from the N-terminus, the 224-residue chain is 7-cyano-7-deazaguanine synthase (224 aa).

10 to 20 (LSGGLDSATVV) serves as a coordination point for ATP. Zn(2+)-binding residues include cysteine 189, cysteine 199, cysteine 202, and cysteine 205.

This sequence belongs to the QueC family. The cofactor is Zn(2+).

It catalyses the reaction 7-carboxy-7-deazaguanine + NH4(+) + ATP = 7-cyano-7-deazaguanine + ADP + phosphate + H2O + H(+). Its pathway is purine metabolism; 7-cyano-7-deazaguanine biosynthesis. Its function is as follows. Catalyzes the ATP-dependent conversion of 7-carboxy-7-deazaguanine (CDG) to 7-cyano-7-deazaguanine (preQ(0)). In Pseudomonas putida (strain W619), this protein is 7-cyano-7-deazaguanine synthase.